The primary structure comprises 244 residues: 7-cyano-7-deazaguanine synthase (244 aa).

17 to 27 contacts ATP; the sequence is FSGGQDSTTCL. Residues cysteine 205, cysteine 220, cysteine 223, and cysteine 226 each coordinate Zn(2+).

Belongs to the QueC family. Requires Zn(2+) as cofactor.

The enzyme catalyses 7-carboxy-7-deazaguanine + NH4(+) + ATP = 7-cyano-7-deazaguanine + ADP + phosphate + H2O + H(+). Its pathway is purine metabolism; 7-cyano-7-deazaguanine biosynthesis. Its function is as follows. Catalyzes the ATP-dependent conversion of 7-carboxy-7-deazaguanine (CDG) to 7-cyano-7-deazaguanine (preQ(0)). This Bordetella parapertussis (strain 12822 / ATCC BAA-587 / NCTC 13253) protein is 7-cyano-7-deazaguanine synthase.